Here is a 79-residue protein sequence, read N- to C-terminus: Spidroin-1 (79 aa).

It belongs to the silk fibroin family. In terms of assembly, major subunit, with spidroin 2, of the dragline silk.

Its subcellular location is the secreted. The protein localises to the extracellular space. In terms of biological role, spiders' major ampullate silk possesses unique characteristics of strength and elasticity. Fibroin consists of pseudocrystalline regions of antiparallel beta-sheet interspersed with elastic amorphous segments. The protein is Spidroin-1 of Araneus bicentenarius (Giant lichen orbweaver).